The sequence spans 345 residues: N-acetyl-gamma-glutamyl-phosphate reductase (345 aa).

Residue C149 is part of the active site.

It belongs to the NAGSA dehydrogenase family. Type 1 subfamily.

The protein localises to the cytoplasm. It catalyses the reaction N-acetyl-L-glutamate 5-semialdehyde + phosphate + NADP(+) = N-acetyl-L-glutamyl 5-phosphate + NADPH + H(+). Its pathway is amino-acid biosynthesis; L-arginine biosynthesis; N(2)-acetyl-L-ornithine from L-glutamate: step 3/4. In terms of biological role, catalyzes the NADPH-dependent reduction of N-acetyl-5-glutamyl phosphate to yield N-acetyl-L-glutamate 5-semialdehyde. This chain is N-acetyl-gamma-glutamyl-phosphate reductase, found in Bacillus subtilis (strain 168).